We begin with the raw amino-acid sequence, 78 residues long: Probable [Fe-S]-dependent transcriptional repressor (78 aa).

The iron-sulfur cluster site is built by Cys56, Cys61, Cys64, and Cys70.

Belongs to the FeoC family.

Functionally, may function as a transcriptional regulator that controls feoABC expression. This Citrobacter koseri (strain ATCC BAA-895 / CDC 4225-83 / SGSC4696) protein is Probable [Fe-S]-dependent transcriptional repressor.